We begin with the raw amino-acid sequence, 239 residues long: Immunoglobulin superfamily member 23 (239 aa).

The tract at residues 63 to 93 (ELEAQPPTSSSPKGLPGRPRTSQEVPNAEDN) is disordered. The Ig-like domain occupies 94–179 (PSLIPLVTFP…ELVSEPVTVS (86 aa)). Residues 214–234 (LIVAATIGGLVLIGSVCFYIL) form a helical membrane-spanning segment.

The protein resides in the cell membrane. May be involved in osteoclast differentiation. In Mus musculus (Mouse), this protein is Immunoglobulin superfamily member 23.